The chain runs to 400 residues: Phosphoglycerate kinase (400 aa).

Residues Asp-23–Asn-25, Arg-38, His-61–Arg-64, Arg-120, and Arg-153 each bind substrate. Residues Lys-203, Glu-325, and Gly-355–Thr-358 each bind ATP.

It belongs to the phosphoglycerate kinase family. As to quaternary structure, monomer.

Its subcellular location is the cytoplasm. The enzyme catalyses (2R)-3-phosphoglycerate + ATP = (2R)-3-phospho-glyceroyl phosphate + ADP. It functions in the pathway carbohydrate degradation; glycolysis; pyruvate from D-glyceraldehyde 3-phosphate: step 2/5. The sequence is that of Phosphoglycerate kinase from Rhizobium leguminosarum bv. trifolii (strain WSM2304).